The following is a 93-amino-acid chain: Antitoxin RelF (93 aa).

Belongs to the phD/YefM antitoxin family. In terms of assembly, interacts with toxin RelG, which neutralizes the toxin. Also interacts with toxins RelE and RelK in vitro, in M.smegmatis coexpression with non-cognate toxins increases the toxicity of RelE but not of RelK.

In terms of biological role, antitoxin component of a type II toxin-antitoxin (TA) system. Upon expression in M.smegmatis neutralizes the effect of toxin RelE2. Its function is as follows. Induces its own promoter, in combination with RelG represses its own promoter. Has been seen to bind DNA in complex with toxin RelG but not alone. This chain is Antitoxin RelF (relF), found in Mycobacterium tuberculosis (strain ATCC 25618 / H37Rv).